The primary structure comprises 192 residues: uncharacterized protein (192 aa).

Transmembrane regions (helical) follow at residues 31–51 (IVETIGYFIFWLGGFSPYVYE) and 119–139 (VPGAVLMAFLLGVFSGVLWEI).

It localises to the cell membrane. This is an uncharacterized protein from Thermotoga maritima (strain ATCC 43589 / DSM 3109 / JCM 10099 / NBRC 100826 / MSB8).